Here is a 643-residue protein sequence, read N- to C-terminus: Phosphatidylinositol-3,5-bisphosphate 3-phosphatase MTMR2 (643 aa).

Composition is skewed to polar residues over residues 1-12 and 23-40; these read MEKSSSCESLGS and DSLS…VHTK. A disordered region spans residues 1 to 54; that stretch reads MEKSSSCESLGSQPAVARPPSVDSLSSASTSHSENSVHTKSASVVSSDSISTSA. A phosphoserine mark is found at S6 and S9. Positions 41-54 are enriched in low complexity; sequence SASVVSSDSISTSA. S58 bears the Phosphoserine mark. In terms of domain architecture, GRAM spans 68–139; the sequence is NKLAEMEEPP…GVISRVEKIG (72 aa). The 376-residue stretch at 205–580 folds into the Myotubularin phosphatase domain; that stretch reads GWKLYDSLSE…RHLELWVGYY (376 aa). Residues N330, N355, and I356 each coordinate a 1,2-diacyl-sn-glycero-3-phospho-(1D-myo-inositol-3,5-bisphosphate). A 1,2-diacyl-sn-glycero-3-phospho-(1D-myo-inositol-3-phosphate)-binding residues include N330, N355, and I356. The Phosphocysteine intermediate role is filled by C417. Residues S418, D419, G420, W421, D422, R423, R459, and R463 each coordinate a 1,2-diacyl-sn-glycero-3-phospho-(1D-myo-inositol-3,5-bisphosphate). S418, D419, G420, W421, D422, and R423 together coordinate a 1,2-diacyl-sn-glycero-3-phospho-(1D-myo-inositol-3-phosphate). R463 contributes to the a 1,2-diacyl-sn-glycero-3-phospho-(1D-myo-inositol-3-phosphate) binding site. Residues 593–627 adopt a coiled-coil conformation; the sequence is IHNRYKELLAKRAELQKKVEELQREISNRSTSSSE. Residues 614–643 are disordered; sequence LQREISNRSTSSSERAGSPAQCVTPVQTVV.

It belongs to the protein-tyrosine phosphatase family. Non-receptor class myotubularin subfamily. In terms of assembly, homodimer (via coiled-coil domain). Heterotetramer consisting of one MTMR2 dimer and one SBF2/MTMR13 dimer; specifically in peripheral nerves stabilizes SBF2/MTMR13 at the membranes and increases MTMR2 catalytic activity towards phosphatidylinositol 3,5-bisphosphate and to a lesser extent towards phosphatidylinositol 3-phosphate. Heterodimer with SBF1/MTMR5; acts as an adapter for the phosphatase MTMR2 to regulate MTMR2 catalytic activity and subcellular location. Heterodimer with MTMR12. Post-translationally, phosphorylation at Ser-58 decreases MTMR2 localization to endocytic vesicular structures.

The protein resides in the cytoplasm. Its subcellular location is the early endosome membrane. It localises to the perinuclear region. It is found in the cell projection. The protein localises to the axon. The protein resides in the endosome membrane. The catalysed reaction is a 1,2-diacyl-sn-glycero-3-phospho-(1D-myo-inositol-3,5-bisphosphate) + H2O = a 1,2-diacyl-sn-glycero-3-phospho-(1D-myo-inositol-5-phosphate) + phosphate. It carries out the reaction a 1,2-diacyl-sn-glycero-3-phospho-(1D-myo-inositol-3-phosphate) + H2O = a 1,2-diacyl-sn-glycero-3-phospho-(1D-myo-inositol) + phosphate. The enzyme catalyses 1,2-dioctanoyl-sn-glycero-3-phospho-(1-D-myo-inositol-3-phosphate) + H2O = 1,2-dioctanoyl-sn-glycero-3-phospho-(1D-myo-inositol) + phosphate. It catalyses the reaction 1,2-dioctanoyl-sn-glycero-3-phospho-(1D-myo-inositol-3,5-bisphosphate) + H2O = 1,2-dioctanoyl-sn-glycero-3-phospho-(1D-myo-inositol-5-phosphate) + phosphate. Lipid phosphatase that specifically dephosphorylates the D-3 position of phosphatidylinositol 3-phosphate and phosphatidylinositol 3,5-bisphosphate, generating phosphatidylinositol and phosphatidylinositol 5-phosphate. Regulates the level of these phosphoinositides critical for various biological processes including autophagy initiation and autophagosome maturation. The chain is Phosphatidylinositol-3,5-bisphosphate 3-phosphatase MTMR2 from Bos taurus (Bovine).